We begin with the raw amino-acid sequence, 205 residues long: Holliday junction branch migration complex subunit RuvA (205 aa).

Residues M1 to A64 form a domain I region. The segment at E65 to L143 is domain II. The interval A144–S153 is flexible linker. The interval S153–V205 is domain III.

This sequence belongs to the RuvA family. Homotetramer. Forms an RuvA(8)-RuvB(12)-Holliday junction (HJ) complex. HJ DNA is sandwiched between 2 RuvA tetramers; dsDNA enters through RuvA and exits via RuvB. An RuvB hexamer assembles on each DNA strand where it exits the tetramer. Each RuvB hexamer is contacted by two RuvA subunits (via domain III) on 2 adjacent RuvB subunits; this complex drives branch migration. In the full resolvosome a probable DNA-RuvA(4)-RuvB(12)-RuvC(2) complex forms which resolves the HJ.

The protein resides in the cytoplasm. Its function is as follows. The RuvA-RuvB-RuvC complex processes Holliday junction (HJ) DNA during genetic recombination and DNA repair, while the RuvA-RuvB complex plays an important role in the rescue of blocked DNA replication forks via replication fork reversal (RFR). RuvA specifically binds to HJ cruciform DNA, conferring on it an open structure. The RuvB hexamer acts as an ATP-dependent pump, pulling dsDNA into and through the RuvAB complex. HJ branch migration allows RuvC to scan DNA until it finds its consensus sequence, where it cleaves and resolves the cruciform DNA. In Cellvibrio japonicus (strain Ueda107) (Pseudomonas fluorescens subsp. cellulosa), this protein is Holliday junction branch migration complex subunit RuvA.